We begin with the raw amino-acid sequence, 177 residues long: Peptide deformylase (177 aa).

Residues C98 and H140 each contribute to the Fe cation site. E141 is an active-site residue. Residue H144 coordinates Fe cation.

It belongs to the polypeptide deformylase family. Fe(2+) serves as cofactor.

The enzyme catalyses N-terminal N-formyl-L-methionyl-[peptide] + H2O = N-terminal L-methionyl-[peptide] + formate. In terms of biological role, removes the formyl group from the N-terminal Met of newly synthesized proteins. Requires at least a dipeptide for an efficient rate of reaction. N-terminal L-methionine is a prerequisite for activity but the enzyme has broad specificity at other positions. The sequence is that of Peptide deformylase from Zymomonas mobilis subsp. mobilis (strain ATCC 31821 / ZM4 / CP4).